Reading from the N-terminus, the 334-residue chain is Cytosolic Fe-S cluster assembly factor NUBP1 homolog (334 aa).

The interval 1–24 (MSSAEVTAAAKPADAPEHCPGTAS) is disordered. Residues Cys19, Cys33, Cys36, and Cys42 each contribute to the [4Fe-4S] cluster site. 72–79 (GKGGVGKS) is a binding site for ATP. The [4Fe-4S] cluster site is built by Cys247 and Cys250.

It belongs to the Mrp/NBP35 ATP-binding proteins family. NUBP1/NBP35 subfamily. Heterotetramer of 2 NUBP1 and 2 NUBP2 chains. Requires [4Fe-4S] cluster as cofactor.

The protein localises to the cytoplasm. Functionally, component of the cytosolic iron-sulfur (Fe/S) protein assembly (CIA) machinery. Required for maturation of extramitochondrial Fe-S proteins. The NUBP1-NUBP2 heterotetramer forms a Fe-S scaffold complex, mediating the de novo assembly of an Fe-S cluster and its transfer to target apoproteins. This chain is Cytosolic Fe-S cluster assembly factor NUBP1 homolog, found in Culex quinquefasciatus (Southern house mosquito).